The following is a 151-amino-acid chain: Small ribosomal subunit protein uS15 (151 aa).

This sequence belongs to the universal ribosomal protein uS15 family.

In Ciona intestinalis (Transparent sea squirt), this protein is Small ribosomal subunit protein uS15 (RPS13).